A 331-amino-acid polypeptide reads, in one-letter code: DNA-directed RNA polymerase subunit alpha (331 aa).

The alpha N-terminal domain (alpha-NTD) stretch occupies residues 1–230 (MKNIKTSPYI…KQMSVFNSEW (230 aa)). Positions 247–331 (LKPLLQKIEA…ALQKRLNKLK (85 aa)) are alpha C-terminal domain (alpha-CTD).

It belongs to the RNA polymerase alpha chain family. As to quaternary structure, homodimer. The RNAP catalytic core consists of 2 alpha, 1 beta/beta' and 1 omega subunit. When a sigma factor is associated with the core the holoenzyme is formed, which can initiate transcription.

It carries out the reaction RNA(n) + a ribonucleoside 5'-triphosphate = RNA(n+1) + diphosphate. Functionally, DNA-dependent RNA polymerase catalyzes the transcription of DNA into RNA using the four ribonucleoside triphosphates as substrates. This Wolinella succinogenes (strain ATCC 29543 / DSM 1740 / CCUG 13145 / JCM 31913 / LMG 7466 / NCTC 11488 / FDC 602W) (Vibrio succinogenes) protein is DNA-directed RNA polymerase subunit alpha.